Reading from the N-terminus, the 168-residue chain is ATP synthase subunit b (168 aa).

The chain crosses the membrane as a helical span at residues 9–29 (LFNLSTFVFTIINLLVLYYIL).

Belongs to the ATPase B chain family. In terms of assembly, F-type ATPases have 2 components, F(1) - the catalytic core - and F(0) - the membrane proton channel. F(1) has five subunits: alpha(3), beta(3), gamma(1), delta(1), epsilon(1). F(0) has three main subunits: a(1), b(2) and c(10-14). The alpha and beta chains form an alternating ring which encloses part of the gamma chain. F(1) is attached to F(0) by a central stalk formed by the gamma and epsilon chains, while a peripheral stalk is formed by the delta and b chains.

The protein resides in the cell membrane. In terms of biological role, f(1)F(0) ATP synthase produces ATP from ADP in the presence of a proton or sodium gradient. F-type ATPases consist of two structural domains, F(1) containing the extramembraneous catalytic core and F(0) containing the membrane proton channel, linked together by a central stalk and a peripheral stalk. During catalysis, ATP synthesis in the catalytic domain of F(1) is coupled via a rotary mechanism of the central stalk subunits to proton translocation. Its function is as follows. Component of the F(0) channel, it forms part of the peripheral stalk, linking F(1) to F(0). The polypeptide is ATP synthase subunit b (Caldanaerobacter subterraneus subsp. tengcongensis (strain DSM 15242 / JCM 11007 / NBRC 100824 / MB4) (Thermoanaerobacter tengcongensis)).